The following is a 222-amino-acid chain: Transmembrane reductase CYB561D2 (222 aa).

The Cytoplasmic portion of the chain corresponds to 2–17 (ALSAETESHIYRALRT). Residues 14–217 (ALRTASGAAA…NQVSNAYLYR (204 aa)) form the Cytochrome b561 domain. A helical membrane pass occupies residues 18–38 (ASGAAAHLVALGFTIFVAVLA). The Lumenal segment spans residues 39-46 (RPGSSLFS). Residues 47–67 (WHPVLMSLAFSFLMTEALLVF) traverse the membrane as a helical segment. Histidine 48 is a heme b binding site. The Cytoplasmic segment spans residues 68-85 (SPESSLLHSLSRKGRARC). The heme b site is built by histidine 86 and histidine 120. Residues 86–106 (HWVLQLLALLCALLGLGLVIL) traverse the membrane as a helical segment. Over 107-122 (HKEQLGKAHLVTRHGQ) the chain is Lumenal. A helical transmembrane segment spans residues 123-143 (AGLLAVLWAGLQCSGGVGLLY). Over 144-162 (PKLLPRWPLAKLKLYHATS) the chain is Cytoplasmic. A heme b-binding site is contributed by histidine 159. Residues 163–183 (GLVGYLLGSASLLLGMCSLWF) form a helical membrane-spanning segment. Topologically, residues 184 to 186 (TAS) are lumenal. A helical transmembrane segment spans residues 187 to 207 (VTGAAWYLAVLCPVLTSLVIM). At 208-222 (NQVSNAYLYRKRIQP) the chain is on the cytoplasmic side.

Requires heme b as cofactor.

Its subcellular location is the endoplasmic reticulum membrane. It is found in the cytoplasmic vesicle membrane. It catalyses the reaction monodehydro-L-ascorbate radical(out) + L-ascorbate(in) = monodehydro-L-ascorbate radical(in) + L-ascorbate(out). The catalysed reaction is Fe(3+)(out) + L-ascorbate(in) = monodehydro-L-ascorbate radical(in) + Fe(2+)(out) + H(+). Its function is as follows. Transmembrane reductase that may use ascorbate as an electron donor in the cytoplasm and transfer electrons across endoplasmic reticulum membranes to reduce monodehydro-L-ascorbate radical and iron cations Fe(3+) in the lumen of that compartment. The sequence is that of Transmembrane reductase CYB561D2 from Homo sapiens (Human).